The following is a 325-amino-acid chain: NADH-quinone oxidoreductase subunit H (325 aa).

Helical transmembrane passes span 8 to 28 (VIDI…VVTC), 81 to 101 (GIFT…FAIV), 114 to 134 (IGVL…LFAG), 159 to 179 (FLGL…LGAI), 186 to 206 (LWNV…GVAV), 237 to 257 (FFVG…TLFF), 265 to 285 (LPPF…FILI), and 304 to 324 (ICLP…LYNA).

This sequence belongs to the complex I subunit 1 family. NDH-1 is composed of 13 different subunits. Subunits NuoA, H, J, K, L, M, N constitute the membrane sector of the complex.

It is found in the cell inner membrane. The catalysed reaction is a quinone + NADH + 5 H(+)(in) = a quinol + NAD(+) + 4 H(+)(out). Its function is as follows. NDH-1 shuttles electrons from NADH, via FMN and iron-sulfur (Fe-S) centers, to quinones in the respiratory chain. The immediate electron acceptor for the enzyme in this species is believed to be ubiquinone. Couples the redox reaction to proton translocation (for every two electrons transferred, four hydrogen ions are translocated across the cytoplasmic membrane), and thus conserves the redox energy in a proton gradient. This subunit may bind ubiquinone. In Sodalis glossinidius (strain morsitans), this protein is NADH-quinone oxidoreductase subunit H.